The following is a 187-amino-acid chain: Cell division protein SepF (187 aa).

A disordered region spans residues 13 to 74 (GLAEDDRYAE…PAPATTAQVT (62 aa)). Positions 16–65 (EDDRYAEDTEPETTRPRVEAAREVRVESRHEARPEVRHEPRPEVSVERRP) are enriched in basic and acidic residues.

It belongs to the SepF family. Homodimer. Interacts with FtsZ.

It is found in the cytoplasm. Cell division protein that is part of the divisome complex and is recruited early to the Z-ring. Probably stimulates Z-ring formation, perhaps through the cross-linking of FtsZ protofilaments. Its function overlaps with FtsA. The sequence is that of Cell division protein SepF from Kineococcus radiotolerans (strain ATCC BAA-149 / DSM 14245 / SRS30216).